A 190-amino-acid chain; its full sequence is Orotate phosphoribosyltransferase (190 aa).

Position 114 to 122 (114 to 122 (EDVITTGGS)) interacts with 5-phospho-alpha-D-ribose 1-diphosphate. Orotate contacts are provided by Thr-118 and Arg-146.

It belongs to the purine/pyrimidine phosphoribosyltransferase family. PyrE subfamily. In terms of assembly, homodimer. Requires Mg(2+) as cofactor.

The catalysed reaction is orotidine 5'-phosphate + diphosphate = orotate + 5-phospho-alpha-D-ribose 1-diphosphate. It participates in pyrimidine metabolism; UMP biosynthesis via de novo pathway; UMP from orotate: step 1/2. Its function is as follows. Catalyzes the transfer of a ribosyl phosphate group from 5-phosphoribose 1-diphosphate to orotate, leading to the formation of orotidine monophosphate (OMP). This chain is Orotate phosphoribosyltransferase, found in Pelotomaculum thermopropionicum (strain DSM 13744 / JCM 10971 / SI).